The chain runs to 123 residues: uncharacterized protein (123 aa).

A helical membrane pass occupies residues 5–25 (GTLVIIFAIVLILCIMLLFFY). Residues 32 to 53 (KPSVLPPPIPPPTPPPSKKKYD) are disordered. The segment covering 35–47 (VLPPPIPPPTPPP) has biased composition (pro residues).

It belongs to the asfivirus CP123L family.

It is found in the host membrane. Its subcellular location is the virion. This is an uncharacterized protein from Ornithodoros (relapsing fever ticks).